A 356-amino-acid polypeptide reads, in one-letter code: Arginine kinase (356 aa).

The region spanning 8–91 (EKLEAGFKKL…FDPIIEDYHG (84 aa)) is the Phosphagen kinase N-terminal domain. 64–68 (GVGIY) is a substrate binding site. The Phosphagen kinase C-terminal domain occupies 119–356 (YVISTRVRCG…LELIKIEGSL (238 aa)). ATP is bound by residues 122–126 (STRVR) and H185. E225 is a substrate binding site. R229 is an ATP binding site. C271 serves as a coordination point for substrate. Residues 280–284 (RASVH) and 309–314 (RGSTGE) each bind ATP. Residue E314 coordinates substrate.

The protein belongs to the ATP:guanido phosphotransferase family.

The catalysed reaction is L-arginine + ATP = N(omega)-phospho-L-arginine + ADP + H(+). The chain is Arginine kinase (ARGK) from Schistocerca americana (American grasshopper).